The chain runs to 687 residues: MSDKNKKVSAFAAYRGSATSKNDVQKGTKNSDKNGAAKNNNNRNLASKNGGKQKGPPKKNGSYSDGDNGSSSSSGEDEEDDSTDSSDEYESSESGEEYTLNSHSSQSSPETPANTRESLKRRNDEAEGSNPIGAKRTSSTPVGQSTSAARSTQQPKAPSCPLQRRSCPLPSKKNTVPVKVEVASPDRALLSPQSIKKEPGASMLCRIKIGLVKSVQPGGDAGAEAGAGQAVNRLEPCHKVHKENSIEVGKRTLAQLIAPMTMATFLRDHWEKSPFRVKTTTSGGFSNLISFKMIDQMLIQNHVEYTTNIDVTSYEDGVRKTLNPDGRALPPSVWAHYQRGCSIRILNPSSYLVQLRQLCVKLQEFFHCLVGANVYLTPPESQGFAPHYDDIEAFVLQVEGKKRWRIYAPTKELPRESSGNLSQTELGDPIMDIVLKPGDLLYFPRGWIHQAITEKDSHSLHITLSAYQQQSYANLMEKLMPLVVKESVEQTLKLRKGLPLDIFQNLGVANAEWKGAHRQKLIQHIQNLAQRLVPTEGQIDRALDQLAIKFQHEALPPTIAPQELKRTVFGAQATADRNGHCSLDYELAEGTAVRLLRANIVRLTVDEGVLRCYYYTDNGLEYCKYEPNFFELEPFHGTVIETLIHAYPEYTKIKDLPPMGNDEDRLEFVEALWERGILMVEKPFKKL.

The interval 1-174 (MSDKNKKVSA…RSCPLPSKKN (174 aa)) is disordered. A compositionally biased stretch (basic and acidic residues) spans 23–32 (DVQKGTKNSD). Low complexity-rich tracts occupy residues 33-50 (KNGA…SKNG) and 58-74 (KKNG…SSSS). Over residues 75–96 (GEDEEDDSTDSSDEYESSESGE) the composition is skewed to acidic residues. Composition is skewed to polar residues over residues 100 to 116 (LNSH…ANTR) and 136 to 156 (RTSS…QQPK). In terms of domain architecture, JmjC spans 347–483 (NPSSYLVQLR…NLMEKLMPLV (137 aa)). The Fe cation site is built by His-387, Asp-389, and His-449.

It belongs to the ROX family. NO66 subfamily. The cofactor is Fe(2+).

Its subcellular location is the nucleus. It catalyses the reaction N(6),N(6)-dimethyl-L-lysyl(36)-[histone H3] + 2 2-oxoglutarate + 2 O2 = L-lysyl(36)-[histone H3] + 2 formaldehyde + 2 succinate + 2 CO2. In terms of biological role, oxygenase that can act as both a histone lysine demethylase and a ribosomal histidine hydroxylase. Specifically demethylates 'Lys-4' (H3K4me) and 'Lys-36' (H3K36me) of histone H3, thereby playing a central role in histone code. The protein is Bifunctional lysine-specific demethylase and histidyl-hydroxylase NO66 of Drosophila persimilis (Fruit fly).